The sequence spans 79 residues: Protein B6 (79 aa).

The sequence is that of Protein B6 (B6) from Human herpesvirus 6B (strain Z29) (HHV-6 variant B).